The following is a 456-amino-acid chain: Bifunctional protein GlmU (456 aa).

The segment at 1–228 is pyrophosphorylase; the sequence is MPQNTLNIVI…SHLAAGVNNK (228 aa). UDP-N-acetyl-alpha-D-glucosamine is bound by residues 11-14, Lys-25, Gln-75, 80-81, 102-104, Gly-138, Glu-153, Asn-168, and Asn-226; these read LAAG, GT, and YGD. Asp-104 lines the Mg(2+) pocket. Asn-226 lines the Mg(2+) pocket. The tract at residues 229 to 249 is linker; sequence LQLAELERIFQTGQAQELLKA. Positions 250–456 are N-acetyltransferase; sequence GVTLHDPARF…GWVRPEKDKQ (207 aa). 2 residues coordinate UDP-N-acetyl-alpha-D-glucosamine: Arg-332 and Lys-350. His-362 serves as the catalytic Proton acceptor. The UDP-N-acetyl-alpha-D-glucosamine site is built by Tyr-365 and Asn-376. Residues Ala-379, 385–386, Ser-404, Ala-422, and Arg-439 each bind acetyl-CoA; that span reads NY.

This sequence in the N-terminal section; belongs to the N-acetylglucosamine-1-phosphate uridyltransferase family. In the C-terminal section; belongs to the transferase hexapeptide repeat family. In terms of assembly, homotrimer. It depends on Mg(2+) as a cofactor.

Its subcellular location is the cytoplasm. The enzyme catalyses alpha-D-glucosamine 1-phosphate + acetyl-CoA = N-acetyl-alpha-D-glucosamine 1-phosphate + CoA + H(+). It carries out the reaction N-acetyl-alpha-D-glucosamine 1-phosphate + UTP + H(+) = UDP-N-acetyl-alpha-D-glucosamine + diphosphate. It functions in the pathway nucleotide-sugar biosynthesis; UDP-N-acetyl-alpha-D-glucosamine biosynthesis; N-acetyl-alpha-D-glucosamine 1-phosphate from alpha-D-glucosamine 6-phosphate (route II): step 2/2. Its pathway is nucleotide-sugar biosynthesis; UDP-N-acetyl-alpha-D-glucosamine biosynthesis; UDP-N-acetyl-alpha-D-glucosamine from N-acetyl-alpha-D-glucosamine 1-phosphate: step 1/1. It participates in bacterial outer membrane biogenesis; LPS lipid A biosynthesis. Functionally, catalyzes the last two sequential reactions in the de novo biosynthetic pathway for UDP-N-acetylglucosamine (UDP-GlcNAc). The C-terminal domain catalyzes the transfer of acetyl group from acetyl coenzyme A to glucosamine-1-phosphate (GlcN-1-P) to produce N-acetylglucosamine-1-phosphate (GlcNAc-1-P), which is converted into UDP-GlcNAc by the transfer of uridine 5-monophosphate (from uridine 5-triphosphate), a reaction catalyzed by the N-terminal domain. This Neisseria meningitidis serogroup C (strain 053442) protein is Bifunctional protein GlmU.